We begin with the raw amino-acid sequence, 1203 residues long: DNA-directed RNA polymerase I subunit RPA135 (1203 aa).

An N-acetylserine modification is found at Ser-2. Phosphoserine is present on Ser-81. The C4-type zinc-finger motif lies at 1104-1131 (CRECGSILTTQQSVPRIGSISTVCCRRC). Ser-1156 carries the post-translational modification Phosphoserine.

The protein belongs to the RNA polymerase beta chain family. In terms of assembly, component of the RNA polymerase I (Pol I) complex consisting of 14 subunits: RPA135, RPA190, RPC40, RPA14, RPB5, RPO26, RPA43, RPB8, RPA12, RPB10, RPC19, RPC10, RPA49 and RPA34. The complex is composed of a horseshoe-shaped core containing ten subunits (RPA135, RPA190, RPB5, RPO26, RPB8, RPB10, RPC10, RPA12, RPC19 and RPC40) where RPA135 and RPA190 form the DNA-binding cleft. Outside of the core, RPA14 and RPA43 form the stalk that mediates interactions with transcription initiation factors and newly synthesized RNA.

It localises to the nucleus. The protein localises to the nucleolus. It carries out the reaction RNA(n) + a ribonucleoside 5'-triphosphate = RNA(n+1) + diphosphate. Functionally, DNA-dependent RNA polymerases catalyze the transcription of DNA into RNA using the four ribonucleoside triphosphates as substrates. Component of RNA polymerase I (Pol I) which synthesizes ribosomal RNA precursors. Besides, RNA polymerase I has intrinsic RNA cleavage activity. RPA190 and RPA135 both contribute to the polymerase catalytic activity and together form the Pol I active center. In addition, subunit RPA12 contributes a catalytic zinc ribbon that is required for RNA cleavage by Pol I. A single stranded DNA template strand of the promoter is positioned within the central active site cleft of Pol I. A bridging helix emanates from RPA190 and crosses the cleft near the catalytic site and is thought to promote translocation of Pol I by acting as a ratchet that moves the RNA-DNA hybrid through the active site by switching from straight to bent conformations at each step of nucleotide addition. This Saccharomyces cerevisiae (strain ATCC 204508 / S288c) (Baker's yeast) protein is DNA-directed RNA polymerase I subunit RPA135 (RPA135).